The primary structure comprises 340 residues: GTP 3',8-cyclase (340 aa).

The Radical SAM core domain occupies 20–246 (RFERQYVYLR…PKALSDGPAK (227 aa)). Arg29 contributes to the GTP binding site. Residues Cys36 and Cys40 each coordinate [4Fe-4S] cluster. Tyr42 is a binding site for S-adenosyl-L-methionine. Cys43 contributes to the [4Fe-4S] cluster binding site. Arg79 lines the GTP pocket. S-adenosyl-L-methionine is bound at residue Gly83. GTP is bound at residue Thr110. Residue Ser134 participates in S-adenosyl-L-methionine binding. Residue Lys171 participates in GTP binding. Met205 serves as a coordination point for S-adenosyl-L-methionine. The [4Fe-4S] cluster site is built by Cys268 and Cys271. GTP is bound at residue 273–275 (RLR). Cys285 contributes to the [4Fe-4S] cluster binding site.

The protein belongs to the radical SAM superfamily. MoaA family. Monomer and homodimer. [4Fe-4S] cluster serves as cofactor.

It catalyses the reaction GTP + AH2 + S-adenosyl-L-methionine = (8S)-3',8-cyclo-7,8-dihydroguanosine 5'-triphosphate + 5'-deoxyadenosine + L-methionine + A + H(+). It participates in cofactor biosynthesis; molybdopterin biosynthesis. Functionally, catalyzes the cyclization of GTP to (8S)-3',8-cyclo-7,8-dihydroguanosine 5'-triphosphate. This chain is GTP 3',8-cyclase, found in Actinobacillus pleuropneumoniae serotype 7 (strain AP76).